A 653-amino-acid polypeptide reads, in one-letter code: Sodium-dependent phosphate transporter 2 (653 aa).

The Extracellular segment spans residues Met1–Gly5. A helical membrane pass occupies residues Tyr6 to Ala26. Residues Asn27–Gln46 lie on the Cytoplasmic side of the membrane. Residues Ala47–Gly67 traverse the membrane as a helical segment. Over Glu68–Thr86 the chain is Extracellular. Asn81 carries N-linked (GlcNAc...) asparagine glycosylation. The chain crosses the membrane as a helical span at residues Leu87–Phe107. Topologically, residues Leu108–Arg109 are cytoplasmic. A helical membrane pass occupies residues Leu110–Ile130. Residues Gly131–Lys142 lie on the Extracellular side of the membrane. Residues Ile143–Ile163 traverse the membrane as a helical segment. Residues Leu164–Thr190 are Cytoplasmic-facing. The chain crosses the membrane as a helical span at residues Ile191–Pro211. Over Ile212–Trp213 the chain is Extracellular. The helical transmembrane segment at Ala214 to Val234 threads the bilayer. The Cytoplasmic segment spans residues Cys235–Glu483. Phosphoserine is present on residues Ser253, Ser256, Ser259, and Ser268. Residues Pro275–Tyr311 form a disordered region. Polar residues predominate over residues Ser295–Gly304. Phosphoserine occurs at positions 316 and 385. The tract at residues Ser459–Glu478 is disordered. Residues Val484–Gly504 traverse the membrane as a helical segment. At Gly505–Ala531 the chain is on the extracellular side. Residues Val532–Trp552 traverse the membrane as a helical segment. The Cytoplasmic segment spans residues Gly553–Gly572. Residues Phe573–Ser587 form a helical membrane-spanning segment. Residues Asn588–Ser594 are Extracellular-facing. A helical transmembrane segment spans residues Thr595–Arg610. The Cytoplasmic segment spans residues Ser611–Asn622. Residues Ile623–Ala643 form a helical membrane-spanning segment. The Extracellular portion of the chain corresponds to Leu644–Val653.

It belongs to the inorganic phosphate transporter (PiT) (TC 2.A.20) family. In terms of assembly, homodimer.

It is found in the cell membrane. Its subcellular location is the apical cell membrane. The enzyme catalyses 2 Na(+)(out) + phosphate(out) = 2 Na(+)(in) + phosphate(in). Functionally, sodium-phosphate symporter which preferentially transports the monovalent form of phosphate with a stoichiometry of two sodium ions per phosphate ion. Plays a critical role in the determination of bone quality and strength by providing phosphate for bone mineralization. Required to maintain normal cerebrospinal fluid phosphate levels. Mediates phosphate-induced calcification of vascular smooth muscle cells (VCMCs) and can functionally compensate for loss of SLC20A1 in VCMCs. Its function is as follows. (Microbial infection) Functions as a retroviral receptor for feline leukemia virus subgroup B (FeLV-B). This is Sodium-dependent phosphate transporter 2 (SLC20A2) from Felis catus (Cat).